Here is a 417-residue protein sequence, read N- to C-terminus: 4-hydroxy-3-methylbut-2-en-1-yl diphosphate synthase (flavodoxin) (417 aa).

4 residues coordinate [4Fe-4S] cluster: Cys-305, Cys-308, Cys-351, and Glu-358.

It belongs to the IspG family. It depends on [4Fe-4S] cluster as a cofactor.

It carries out the reaction (2E)-4-hydroxy-3-methylbut-2-enyl diphosphate + oxidized [flavodoxin] + H2O + 2 H(+) = 2-C-methyl-D-erythritol 2,4-cyclic diphosphate + reduced [flavodoxin]. Its pathway is isoprenoid biosynthesis; isopentenyl diphosphate biosynthesis via DXP pathway; isopentenyl diphosphate from 1-deoxy-D-xylulose 5-phosphate: step 5/6. Functionally, converts 2C-methyl-D-erythritol 2,4-cyclodiphosphate (ME-2,4cPP) into 1-hydroxy-2-methyl-2-(E)-butenyl 4-diphosphate. The sequence is that of 4-hydroxy-3-methylbut-2-en-1-yl diphosphate synthase (flavodoxin) from Nitrosomonas europaea (strain ATCC 19718 / CIP 103999 / KCTC 2705 / NBRC 14298).